A 129-amino-acid polypeptide reads, in one-letter code: Glycine cleavage system H protein (129 aa).

Residues 22–103 (TGTVGITDYA…AHTAWIMKIE (82 aa)) form the Lipoyl-binding domain. Position 63 is an N6-lipoyllysine (Lys63).

The protein belongs to the GcvH family. As to quaternary structure, the glycine cleavage system is composed of four proteins: P, T, L and H. It depends on (R)-lipoate as a cofactor.

In terms of biological role, the glycine cleavage system catalyzes the degradation of glycine. The H protein shuttles the methylamine group of glycine from the P protein to the T protein. In Acidobacterium capsulatum (strain ATCC 51196 / DSM 11244 / BCRC 80197 / JCM 7670 / NBRC 15755 / NCIMB 13165 / 161), this protein is Glycine cleavage system H protein.